We begin with the raw amino-acid sequence, 63 residues long: Overexpressed in colon carcinoma 1 protein homolog (63 aa).

Polar residues predominate over residues 1 to 10; it reads MGCGNSTATS. The tract at residues 1-39 is disordered; the sequence is MGCGNSTATSAAAGRGPTGAVKDTTEDSITEDDKRRNYG.

Belongs to the OCC1 family.

The protein is Overexpressed in colon carcinoma 1 protein homolog of Mus musculus (Mouse).